A 307-amino-acid chain; its full sequence is Voltage-dependent anion channel-forming protein alr2987 (307 aa).

The next 4 membrane-spanning stretches (helical) occupy residues 19 to 39 (VIGA…LVTL), 47 to 67 (VSQP…LLVF), 209 to 229 (PLAY…LLPF), and 238 to 258 (WTGL…AIGL).

This sequence belongs to the anion channel-forming bestrophin (TC 1.A.46) family.

It localises to the cell membrane. The chain is Voltage-dependent anion channel-forming protein alr2987 from Nostoc sp. (strain PCC 7120 / SAG 25.82 / UTEX 2576).